The chain runs to 151 residues: UPF0178 protein PFLU_5917 (151 aa).

The protein belongs to the UPF0178 family.

The polypeptide is UPF0178 protein PFLU_5917 (Pseudomonas fluorescens (strain SBW25)).